The following is a 365-amino-acid chain: Chorismate synthase (365 aa).

Arginine 48 contacts NADP(+). FMN contacts are provided by residues 125–127, 238–239, glycine 278, 293–297, and arginine 319; these read RSS, NA, and KPTSS.

The protein belongs to the chorismate synthase family. In terms of assembly, homotetramer. It depends on FMNH2 as a cofactor.

The enzyme catalyses 5-O-(1-carboxyvinyl)-3-phosphoshikimate = chorismate + phosphate. Its pathway is metabolic intermediate biosynthesis; chorismate biosynthesis; chorismate from D-erythrose 4-phosphate and phosphoenolpyruvate: step 7/7. Functionally, catalyzes the anti-1,4-elimination of the C-3 phosphate and the C-6 proR hydrogen from 5-enolpyruvylshikimate-3-phosphate (EPSP) to yield chorismate, which is the branch point compound that serves as the starting substrate for the three terminal pathways of aromatic amino acid biosynthesis. This reaction introduces a second double bond into the aromatic ring system. This chain is Chorismate synthase, found in Marinomonas sp. (strain MWYL1).